A 323-amino-acid chain; its full sequence is Lipoyl synthase (323 aa).

7 residues coordinate [4Fe-4S] cluster: Cys61, Cys66, Cys72, Cys87, Cys91, Cys94, and Ser300. One can recognise a Radical SAM core domain in the interval 73 to 289 (WDKKHATFMI…ETVAYSKGFL (217 aa)).

Belongs to the radical SAM superfamily. Lipoyl synthase family. Requires [4Fe-4S] cluster as cofactor.

Its subcellular location is the cytoplasm. It catalyses the reaction [[Fe-S] cluster scaffold protein carrying a second [4Fe-4S](2+) cluster] + N(6)-octanoyl-L-lysyl-[protein] + 2 oxidized [2Fe-2S]-[ferredoxin] + 2 S-adenosyl-L-methionine + 4 H(+) = [[Fe-S] cluster scaffold protein] + N(6)-[(R)-dihydrolipoyl]-L-lysyl-[protein] + 4 Fe(3+) + 2 hydrogen sulfide + 2 5'-deoxyadenosine + 2 L-methionine + 2 reduced [2Fe-2S]-[ferredoxin]. The protein operates within protein modification; protein lipoylation via endogenous pathway; protein N(6)-(lipoyl)lysine from octanoyl-[acyl-carrier-protein]: step 2/2. Catalyzes the radical-mediated insertion of two sulfur atoms into the C-6 and C-8 positions of the octanoyl moiety bound to the lipoyl domains of lipoate-dependent enzymes, thereby converting the octanoylated domains into lipoylated derivatives. The sequence is that of Lipoyl synthase from Rhizobium etli (strain CIAT 652).